The chain runs to 161 residues: uncharacterized protein (161 aa).

This is an uncharacterized protein from Encephalitozoon cuniculi (strain GB-M1) (Microsporidian parasite).